The primary structure comprises 251 residues: RNA polymerase sigma factor SigI (251 aa).

Residues 61 to 74 (DEFSIGLIAFNEAI) carry the Polymerase core binding motif. Positions 206–225 (VKQLEQLVSVSRKTIERNRK) form a DNA-binding region, H-T-H motif.

It belongs to the sigma-70 factor family. SigI subfamily. In terms of assembly, interacts with RsgI.

It localises to the cytoplasm. Its activity is regulated as follows. Negatively regulated by the anti-sigma-I factor RsgI. Upon exposure to heat, SigI is released from RsgI and activated. Transient heat activation of SigI may depend upon DnaK chaperone. In terms of biological role, sigma factors are initiation factors that promote the attachment of RNA polymerase to specific initiation sites and are then released. This sigma factor is involved in regulation of cell wall metabolism in response to heat stress. Acts by regulating the expression of genes such as bcrC, mreBH and lytE. Also plays a role in survival at low temperatures. The polypeptide is RNA polymerase sigma factor SigI (Bacillus subtilis (strain 168)).